Here is a 339-residue protein sequence, read N- to C-terminus: DNA-directed RNA polymerase subunit alpha (339 aa).

Residues 1-233 are alpha N-terminal domain (alpha-NTD); that stretch reads MVREEITGST…DLFLPFIHTE (233 aa). The interval 266–339 is alpha C-terminal domain (alpha-CTD); that stretch reads GIPLNCIFID…IDLPKNKFSL (74 aa).

It belongs to the RNA polymerase alpha chain family. In plastids the minimal PEP RNA polymerase catalytic core is composed of four subunits: alpha, beta, beta', and beta''. When a (nuclear-encoded) sigma factor is associated with the core the holoenzyme is formed, which can initiate transcription.

The protein localises to the plastid. It is found in the chloroplast. It carries out the reaction RNA(n) + a ribonucleoside 5'-triphosphate = RNA(n+1) + diphosphate. DNA-dependent RNA polymerase catalyzes the transcription of DNA into RNA using the four ribonucleoside triphosphates as substrates. The protein is DNA-directed RNA polymerase subunit alpha of Saccharum hybrid (Sugarcane).